We begin with the raw amino-acid sequence, 114 residues long: uncharacterized protein (114 aa).

An ABM domain is found at 13–99 (YYAVIFSSVK…VWYESYAVRV (87 aa)).

This is an uncharacterized protein from Bacillus subtilis (strain 168).